Consider the following 341-residue polypeptide: UDP-3-O-acylglucosamine N-acyltransferase (341 aa).

The Proton acceptor role is filled by His236.

It belongs to the transferase hexapeptide repeat family. LpxD subfamily. Homotrimer.

It carries out the reaction a UDP-3-O-[(3R)-3-hydroxyacyl]-alpha-D-glucosamine + a (3R)-hydroxyacyl-[ACP] = a UDP-2-N,3-O-bis[(3R)-3-hydroxyacyl]-alpha-D-glucosamine + holo-[ACP] + H(+). Its pathway is bacterial outer membrane biogenesis; LPS lipid A biosynthesis. Functionally, catalyzes the N-acylation of UDP-3-O-acylglucosamine using 3-hydroxyacyl-ACP as the acyl donor. Is involved in the biosynthesis of lipid A, a phosphorylated glycolipid that anchors the lipopolysaccharide to the outer membrane of the cell. This Lawsonia intracellularis (strain PHE/MN1-00) protein is UDP-3-O-acylglucosamine N-acyltransferase.